Consider the following 488-residue polypeptide: Glutamyl-tRNA(Gln) amidotransferase subunit A (488 aa).

Residues Lys77 and Ser152 each act as charge relay system in the active site. Ser176 functions as the Acyl-ester intermediate in the catalytic mechanism.

It belongs to the amidase family. GatA subfamily. As to quaternary structure, heterotrimer of A, B and C subunits.

It carries out the reaction L-glutamyl-tRNA(Gln) + L-glutamine + ATP + H2O = L-glutaminyl-tRNA(Gln) + L-glutamate + ADP + phosphate + H(+). Its function is as follows. Allows the formation of correctly charged Gln-tRNA(Gln) through the transamidation of misacylated Glu-tRNA(Gln) in organisms which lack glutaminyl-tRNA synthetase. The reaction takes place in the presence of glutamine and ATP through an activated gamma-phospho-Glu-tRNA(Gln). This is Glutamyl-tRNA(Gln) amidotransferase subunit A from Streptococcus equi subsp. zooepidemicus (strain MGCS10565).